A 904-amino-acid polypeptide reads, in one-letter code: Alanine--tRNA ligase (904 aa).

The Zn(2+) site is built by His594, His598, Cys695, and His699.

The protein belongs to the class-II aminoacyl-tRNA synthetase family. Zn(2+) serves as cofactor.

It localises to the cytoplasm. The catalysed reaction is tRNA(Ala) + L-alanine + ATP = L-alanyl-tRNA(Ala) + AMP + diphosphate. Its function is as follows. Catalyzes the attachment of alanine to tRNA(Ala) in a two-step reaction: alanine is first activated by ATP to form Ala-AMP and then transferred to the acceptor end of tRNA(Ala). Also edits incorrectly charged Ser-tRNA(Ala) and Gly-tRNA(Ala) via its editing domain. This Anaeromyxobacter sp. (strain Fw109-5) protein is Alanine--tRNA ligase.